The following is a 280-amino-acid chain: Ribosomal RNA-processing protein 7 homolog A (280 aa).

In terms of domain architecture, RRM spans 59–159; it reads RTLFVLNVPP…SGIHKWISDY (101 aa). Serine 99 is subject to Phosphoserine.

This sequence belongs to the RRP7 family. In terms of assembly, part of the small subunit (SSU) processome, composed of more than 70 proteins and the RNA chaperone small nucleolar RNA (snoRNA) U3. Interacts with NOL6; required for NOL6 localization to nucleolus. In terms of tissue distribution, expressed in the apical radial glial cells in the developing brain.

It localises to the nucleus. It is found in the nucleolus. Its subcellular location is the cell projection. The protein resides in the cilium. The protein localises to the cytoplasm. It localises to the cytoskeleton. It is found in the microtubule organizing center. Its subcellular location is the centrosome. Its function is as follows. Nucleolar protein that is involved in ribosomal RNA (rRNA) processing. Also plays a role in primary cilia resorption, and cell cycle progression in neurogenesis and neocortex development. Part of the small subunit (SSU) processome, first precursor of the small eukaryotic ribosomal subunit. During the assembly of the SSU processome in the nucleolus, many ribosome biogenesis factors, an RNA chaperone and ribosomal proteins associate with the nascent pre-rRNA and work in concert to generate RNA folding, modifications, rearrangements and cleavage as well as targeted degradation of pre-ribosomal RNA by the RNA exosome. The sequence is that of Ribosomal RNA-processing protein 7 homolog A from Homo sapiens (Human).